Consider the following 97-residue polypeptide: Kunitz-type trypsin inhibitor 1 (97 aa).

This sequence belongs to the protease inhibitor I3 (leguminous Kunitz-type inhibitor) family.

Functionally, exhibits Kunitz trypsin protease inhibitor activity. This chain is Kunitz-type trypsin inhibitor 1, found in Selenicereus costaricensis (Red-fleshed dragon fruit).